Here is a 280-residue protein sequence, read N- to C-terminus: Chlorophyll a-b binding protein CP26, chloroplastic (280 aa).

The N-terminal 48 residues, 1 to 48, are a transit peptide targeting the chloroplast; it reads MASLGVSEMLGTPLNFRAVSRSSAPLASSPSTFKTVALFSKKKPAPAK. Phenylalanine 70 serves as a coordination point for chlorophyll b. Positions 95, 114, and 117 each coordinate chlorophyll a. 2 consecutive transmembrane segments (helical) span residues 110 to 130 and 167 to 187; these read YQAFELIHARWAMLGAAGFII and IPINLVLAVVAEVVLLGGAEY. Residues arginine 119, isoleucine 167, glutamate 186, and arginine 189 each contribute to the chlorophyll b site. Chlorophyll a contacts are provided by lysine 224, glutamate 225, asparagine 228, arginine 230, glutamine 242, and histidine 257. The chain crosses the membrane as a helical span at residues 231 to 251; it reads LAMFAMLGFFIQAYVTGEGPV.

Belongs to the light-harvesting chlorophyll a/b-binding (LHC) protein family. In terms of assembly, forms heterotrimers with LHCB3. The LHC complex consists of chlorophyll a-b binding proteins. The cofactor is Binds at least 14 chlorophylls (8 Chl-a and 6 Chl-b) and carotenoids such as lutein and neoxanthin.. Photoregulated by reversible phosphorylation of its threonine residues.

It is found in the plastid. Its subcellular location is the chloroplast thylakoid membrane. In terms of biological role, the light-harvesting complex (LHC) functions as a light receptor, it captures and delivers excitation energy to photosystems with which it is closely associated. This chain is Chlorophyll a-b binding protein CP26, chloroplastic (LHCB5), found in Arabidopsis thaliana (Mouse-ear cress).